The chain runs to 71 residues: U3-agatoxin-Ao1a (71 aa).

Positions 1–20 (MKAVIFFCLLSVMVFTVIEA) are cleaved as a signal peptide. Positions 21–33 (VKEEGTKPAEAAR) are excised as a propeptide. Cystine bridges form between Cys35–Cys51, Cys42–Cys56, Cys50–Cys66, and Cys58–Cys64. The residue at position 70 (Ser70) is a Serine amide.

This sequence belongs to the neurotoxin 07 (Beta/delta-agtx) family. 01 (aga-2) subfamily. In terms of tissue distribution, expressed by the venom gland.

The protein localises to the secreted. Insecticidal neurotoxin that modulates the insect Nav channel (DmNaV1/tipE (para/tipE)) in a unique manner, with both the activation and inactivation processes being affected. The voltage dependence of activation is shifted toward more hyperpolarized potentials (analogous to site 4 toxins) and a non-inactivating persistent sodium current is induced (site 3-like action). Interestingly, both effects take place in a voltage-dependent manner, producing a bell-shaped curve between -80 and 0 mV. Compared to beta/delta-agatoxin-1 to -3, this toxin appears to affect the insect sodium channel only weakly. The chain is U3-agatoxin-Ao1a from Agelena orientalis (Funnel-web spider).